Reading from the N-terminus, the 332-residue chain is Thiamine thiazole synthase (332 aa).

Substrate contacts are provided by residues Cys-87, 108–109, Gly-116, and Val-184; that span reads EA. Cys-221 is modified (2,3-didehydroalanine (Cys)). Substrate contacts are provided by residues Asp-223, His-238, Met-290, and 300 to 302; that span reads RMG.

Belongs to the THI4 family. As to quaternary structure, homooctamer. Fe cation is required as a cofactor. During the catalytic reaction, a sulfide is transferred from Cys-221 to a reaction intermediate, generating a dehydroalanine residue.

The protein resides in the cytoplasm. It localises to the nucleus. It carries out the reaction [ADP-thiazole synthase]-L-cysteine + glycine + NAD(+) = [ADP-thiazole synthase]-dehydroalanine + ADP-5-ethyl-4-methylthiazole-2-carboxylate + nicotinamide + 3 H2O + 2 H(+). Its function is as follows. Involved in biosynthesis of the thiamine precursor thiazole. Catalyzes the conversion of NAD and glycine to adenosine diphosphate 5-(2-hydroxyethyl)-4-methylthiazole-2-carboxylic acid (ADT), an adenylated thiazole intermediate. The reaction includes an iron-dependent sulfide transfer from a conserved cysteine residue of the protein to a thiazole intermediate. The enzyme can only undergo a single turnover, which suggests it is a suicide enzyme. May have additional roles in adaptation to various stress conditions and in DNA damage tolerance. This chain is Thiamine thiazole synthase, found in Aspergillus fumigatus (strain ATCC MYA-4609 / CBS 101355 / FGSC A1100 / Af293) (Neosartorya fumigata).